A 3029-amino-acid polypeptide reads, in one-letter code: MAKHLYLAFSLILVPFLVSKAKQTSNGEVPWLVGCYRYDFDSSIEVSYHLDHAEPFSCVRLCASNESFRYAAVKNGRSCLCLARVEEKNRLNSSFCDVSCSEEMVNFTCGGKNVASVYSTAVPVIVSLKIRIPSKVKANASVLAVSEVLFRRRKEVSYLNTIALGNETADGVSVTWFLERELYNMTGYLQNKTLKVHSRIWNTLDGNYTNTSSVFLFVIPGVNHVCVLARNLFSQQKKCVPVDVVVPVTGLQLEAIFFKGTMLSVSSSSLSVPLSKYVEIKYAISSGSKPQFLVSLGNRTFHKAYNISGAAALSSSCLAVFPVFKSCGKKTIVVKAGNDFSLKSLRHLLVVHPFTEVLEFEKTEGHCIFTRVNTSVTLKATVGKDAPFGCPMSFEWNFNDSSSIIITDGTSVSHVFSSIQTYLVTVTLNNKFQRKQAAQQVCVQDNIKGVTLLPNVSYLIVSTNHEENLFSVQLSPSADCCGEVSYQFYKNETAFPLTAGRNSPVFHDSKPGRYVVFVQASNGISYATSNKILVDVMEPISSLFIDHLFLNHSHLSPGGKQVHFVAHLATGTNITYSWKFIGGSWENSINTTSNKVNYTFSKNGRYEVVLTASNAISKETASVDIVISDIPECYTRGVAIVGGMREVIRSQEIHLEAKLNLTCNVVNELRYLWKVTRRSDDDYDDDNHLSFFTYQVLIPPCTLEYGMYSIQLEVTMIDAKGIYLSSKNKKEIMITKSPLVAVISGGTERTVSKRKGPITLSASSSHDPDHPDEHKNLRFKWTCRPHGSSISCFNESTLPEIDFSKDALTFNVDWLMADFSHEFEVEVSKQDDPRSSTAFQILYVREKDELFEHVLSLNCIQCEKGHINPSQSLVIRGSCLSCSLDNPQITYRWKLYEVDSFVEGNTWECPSDDHSDRVTPSTTPMTDSNSPSVLQITDSYLEFTIGPCLGNKFEKSAGNKSGLASGSGDGTGNEIKYSSVKAPLKGNETSAIKADDSGDVDDDEVNNDNDDDSSSYSRSTLPTPLSMTNANSVNKPIITTDTPSFNKPNKPINPSMLWSRRRELRHLGEQTTTGIENQNLVLLGKFLKGGQTYLATFDVRDLETKQKGLASIIFQTSVSLKCGVCQITPAVGFSLQTTFQLVCSNWRSRQLLQYHVRYTIEGDRKEFIYSGLRDVTLFVLPAGNPFSNRTVEVHVEVSDGYSPSRTFRPIKVQVKPQTVAKGSSEEEVLLNETDGNNLSLLQMAGDEQRVLQFIMALSISLNRLSQVKNVSSNFHLRVAIREKLLNRFQNLSVYDKYSALQTCLALQSLTSKPDEIGANNVKVASQVLYNVIKNVTSKHKRKKKSLIEARQLLSQELIDCATTVTSNLIEAASLAVQRQDTTEKMLVMVTEATEQLIMAKLSTQVYGEHSLKVSTRNIIAEATQKRSVSNFSSSLSEFQFFMPSHLEEQLNITERCFGTMITCFQENPYFSDMNHTKVGSLSINHCSGEEIQVKNLGSDITILIPMGHGGAEKHPLNFMLKWNHRNVHVINQTAKMENQSLQLHLRPRSVLPSAFNVKFVVRTGKETLLFRSSGEAVNLFVDQEQLRSGSLNASVELEDTAYYRLKSVKGVSFNYSLGMQWIGCFYWNKRGKHWASDGCRLEKSINHTLVCRCNHLTAFSGGFIQPPNSLHLEDLRDTDKLKNSPLTMVLVISILVMYFLLLGFCVKADRHDKKKLGVIFLDDSTTFDANSQSRFQLSVQTGHWFGAGTSADVYLILHDNDVVSHPVELKYVGKPLFQRSSCDVFLLSFPKNLIRNISKIHVWHDNKGDYPSWFLERITIKNVQTGERWVFECNRWLAVDEGNGKVECELFAKKSWSTGLKESFLQHSAKAFLDYHLWLSLLGRPSYSRFTRAQRLSCCLSLLLSFLCVNIAWYRPKIEVTEVLGVLDVSANSIMIGVLGSLMVLPVNFLWIFFFRYSRRSLSRRVKACYPKSEHHTEITELVSSSVIDQSLETVQILSNFGAMRRMLQTRGTQVSGGNVPMSNPNGSGVCYLSAHDDLISDLPLPKGSAGLVETCDFLAALAPTRKKHDVAFDQQSTYSVYAPTTEGRGFYRSKFSLPHGFVYVAWFGCLITGTVTSAITIWYGLSFGWDLSVHWFQSLVFSLLESLLLSQPIMVLAFIFYMSHKTKSGKEDEDNDEGFEDLSTSDVNNIHYGYLNPGFDGQTTKKTPIDKALADRRRQRHLKYLKPPPLSQLAETREKSLKNRVLRNYVVELFVFIMFFVVTCALVFSVADPDVYHLNQSIRTSFLRSHYFTRPENVVDAWKRMSAVLVENASAPSPLMMLLPGTQSLLFGRTKVKKYYSPNVKVCHEAPAIQNSNTSTPLCYAGCHASKGLWITIDLNLTRAAAARQLTQFADTQWNNSCTREVSLDFAIYTPFLRAISAVTLSVKSSFVGTAKCDMELISAPVVFSSNGYSYFIRFTKLLFVVFFLYLLQHEFFLALKMTFSYFTNFWRVYQLLTIAISSACIVSYIHWSLSLYALLREVETERQSRVFYLSRQISWSQGFLQASYSLLLFLLLIRCLHLLRPFRFVRHFGRILSTSISSLLACWVFGFILVVAFAHPGYLLFGSVHSSFKSFGDAFLLVTSFFRLEGVARYQDFALEEQTLLLSTYFALFLIGFCVIVRGSTAAVVLHGIRCLGKRRRGLLSTVFEEFIRIKLQLSKEKKPKKPRPNSVSDLEETDDEDDLEQEAFLEEGPFFPTDHVLDELDAQIEEMSWRVESLFDDDPCADSISCTNSLLSTWLEDCDQGDVEYLYEAGNDPSVYSAGSGYESDHSAMSNSRCYFSSSSSLDIPDERIRHERVIGAKVGSHGCRGDHSLLTVAPNKTTAKQSYFCSSGRDESGSSINFSGDGYESPACSVPQGNMCDLPGACENPNILRNIVLRDSDLREGVLRDRTVWWDGETKKDMSLGAHTLHREKEPIKPKVMYGMVRGCSQKGEKAFPELANIAPHMEATTAGESSEEATCSSSDYEIGKEEASVIPVGQRVVSAM.

The first 21 residues, 1–21 (MAKHLYLAFSLILVPFLVSKA), serve as a signal peptide directing secretion. Over 22 to 1685 (KQTSNGEVPW…RDTDKLKNSP (1664 aa)) the chain is Extracellular. The WSC domain maps to 29 to 121 (VPWLVGCYRY…KNVASVYSTA (93 aa)). 2 PKD domains span residues 364–450 (EGHC…IKGV) and 546–634 (DHLF…PECY). The 844-residue stretch at 633–1476 (CYTRGVAIVG…NPYFSDMNHT (844 aa)) folds into the REJ domain. 3 disordered regions span residues 754–773 (RKGPITLSASSSHDPDHPDE), 909–931 (CPSDDHSDRVTPSTTPMTDSNSP), and 989–1051 (TSAI…PNKP). A compositionally biased stretch (polar residues) spans 918-931 (VTPSTTPMTDSNSP). Positions 997-1013 (SGDVDDDEVNNDNDDDS) are enriched in acidic residues. The span at 1020–1047 (TLPTPLSMTNANSVNKPIITTDTPSFNK) shows a compositional bias: polar residues. In terms of domain architecture, GAIN-B spans 1525-1671 (RNVHVINQTA…GFIQPPNSLH (147 aa)). Cystine bridges form between Cys1624-Cys1651 and Cys1639-Cys1653. Positions 1624 to 1671 (CFYWNKRGKHWASDGCRLEKSINHTLVCRCNHLTAFSGGFIQPPNSLH) are GPS. The chain crosses the membrane as a helical span at residues 1686–1706 (LTMVLVISILVMYFLLLGFCV). The Cytoplasmic portion of the chain corresponds to 1707–1895 (KADRHDKKKL…SYSRFTRAQR (189 aa)). A PLAT domain is found at 1733–1851 (SRFQLSVQTG…GNGKVECELF (119 aa)). A helical transmembrane segment spans residues 1896 to 1916 (LSCCLSLLLSFLCVNIAWYRP). Over 1917–1933 (KIEVTEVLGVLDVSANS) the chain is Extracellular. A helical membrane pass occupies residues 1934–1954 (IMIGVLGSLMVLPVNFLWIFF). Over 1955 to 2101 (FRYSRRSLSR…YRSKFSLPHG (147 aa)) the chain is Cytoplasmic. A helical transmembrane segment spans residues 2102-2122 (FVYVAWFGCLITGTVTSAITI). At 2123-2140 (WYGLSFGWDLSVHWFQSL) the chain is on the extracellular side. A helical membrane pass occupies residues 2141–2161 (VFSLLESLLLSQPIMVLAFIF). Over 2162 to 2250 (YMSHKTKSGK…SLKNRVLRNY (89 aa)) the chain is Cytoplasmic. A helical membrane pass occupies residues 2251 to 2271 (VVELFVFIMFFVVTCALVFSV). The Extracellular portion of the chain corresponds to 2272-2462 (ADPDVYHLNQ…GYSYFIRFTK (191 aa)). A helical transmembrane segment spans residues 2463 to 2483 (LLFVVFFLYLLQHEFFLALKM). Topologically, residues 2484 to 2496 (TFSYFTNFWRVYQ) are cytoplasmic. The chain crosses the membrane as a helical span at residues 2497–2517 (LLTIAISSACIVSYIHWSLSL). Residues 2518–2538 (YALLREVETERQSRVFYLSRQ) lie on the Extracellular side of the membrane. A helical transmembrane segment spans residues 2539 to 2559 (ISWSQGFLQASYSLLLFLLLI). The Cytoplasmic portion of the chain corresponds to 2560 to 2586 (RCLHLLRPFRFVRHFGRILSTSISSLL). A helical membrane pass occupies residues 2587-2607 (ACWVFGFILVVAFAHPGYLLF). The Extracellular portion of the chain corresponds to 2608–2651 (GSVHSSFKSFGDAFLLVTSFFRLEGVARYQDFALEEQTLLLSTY). Residues 2652 to 2672 (FALFLIGFCVIVRGSTAAVVL) form a helical membrane-spanning segment. Over 2673-3029 (HGIRCLGKRR…PVGQRVVSAM (357 aa)) the chain is Cytoplasmic. The tract at residues 2704–2726 (KKPKKPRPNSVSDLEETDDEDDL) is disordered. Over residues 2716 to 2726 (DLEETDDEDDL) the composition is skewed to acidic residues.

This sequence belongs to the polycystin family. Heterodimer of 2 chains generated by proteolytic processing; the large extracellular N-terminal fragment and the membrane-bound C-terminal fragment predominantly remain associated and non-covalently linked. Post-translationally, autoproteolytically processed at the GPS region of the GAIN-B domain; this cleavage modulates receptor activity. As to expression, component of the acid-insoluble and acid-soluble organic matrix of the aragonitic skeleton (at protein level).

It is found in the membrane. The polypeptide is Polycystin-1-related protein (Acropora millepora (Staghorn coral)).